The primary structure comprises 239 residues: Geranylgeranylglyceryl phosphate synthase (239 aa).

Mg(2+)-binding residues include D18 and S45. Residues 166 to 172, 197 to 198, and 219 to 220 each bind sn-glycerol 1-phosphate; these read YLEAGSG, GG, and GT.

This sequence belongs to the GGGP/HepGP synthase family. Group II subfamily. It depends on Mg(2+) as a cofactor.

The protein resides in the cytoplasm. It carries out the reaction sn-glycerol 1-phosphate + (2E,6E,10E)-geranylgeranyl diphosphate = sn-3-O-(geranylgeranyl)glycerol 1-phosphate + diphosphate. The protein operates within membrane lipid metabolism; glycerophospholipid metabolism. Functionally, prenyltransferase that catalyzes the transfer of the geranylgeranyl moiety of geranylgeranyl diphosphate (GGPP) to the C3 hydroxyl of sn-glycerol-1-phosphate (G1P). This reaction is the first ether-bond-formation step in the biosynthesis of archaeal membrane lipids. The protein is Geranylgeranylglyceryl phosphate synthase of Pyrobaculum arsenaticum (strain DSM 13514 / JCM 11321 / PZ6).